A 920-amino-acid chain; its full sequence is Whirlin (920 aa).

Residues 141–224 (LVSLRRAKAH…LVLSVYSAGR (84 aa)) form the PDZ 1 domain. Positions 241 to 262 (QGRSTSPPSSLPHGSTLRQHED) are disordered. Over residues 242 to 257 (GRSTSPPSSLPHGSTL) the composition is skewed to polar residues. The 83-residue stretch at 278–360 (KVNLVLGDGR…LILTVKDVGR (83 aa)) folds into the PDZ 2 domain. 4 disordered regions span residues 502-536 (MKARQPPGPGVGDTYSMVSYSDTGSSTGSHGTSTT), 561-603 (CETT…QGHD), 630-730 (FSAP…AMGA), and 752-828 (RALP…PTST). Low complexity predominate over residues 520–536 (SYSDTGSSTGSHGTSTT). The span at 561–570 (CETTQGSTNA) shows a compositional bias: polar residues. 2 stretches are compositionally biased toward pro residues: residues 589-598 (IKPPPPPPPL) and 636-651 (RSPPPPPGIAPTPTPG). Residues 655–674 (ARDSPSSPIYASISHANPSS) are compositionally biased toward polar residues. At S698 the chain carries Phosphoserine. 2 stretches are compositionally biased toward polar residues: residues 756–775 (QTRTASTLSQLSDSGQTLSE) and 785–800 (EASTSGRGRQTANTKN). Residues 802–813 (NGKELPQTERTT) show a composition bias toward basic and acidic residues. The 84-residue stretch at 829–912 (LIRVRKSAAT…TKERDYIDFL (84 aa)) folds into the PDZ 3 domain.

As to quaternary structure, forms homooligomers. Interacts (via C-terminal PDZ domain) with MYO15A; this interaction is necessary for localization of WHRN to stereocilia tips. Interacts (via C-terminal PDZ domain) with MPP1/p55. Interacts with LRRC4C/NGL1. Interacts with MYO7A. Interacts with RPGR. Interacts with EPS8. Interacts with CASK. Interacts with CIB2. Component of USH2 complex, composed of ADGRV1, PDZD7, USH2A and WHRN. Interacts (via PDZ domains) with PDZD7; the interaction is direct. Interacts (via N-terminal PDZ domain) with USH2A (via cytoplasmic region). Interacts with ADGRV1/MASS1 (via cytoplasmic region). Ubiquitous. Highly expressed in heart, spleen, lung and liver. Highly expressed in brain, in the olfactory bulb, thalamus, layers III-V of the cerebral cortex and the molecular layer of cerebellum. Detected in soma and dendrites of thalamic neurons, and in cerebrum in cell bodies and apical dendrites of pyramidal neurons. Expressed in retina and inner ear.

The protein resides in the cytoplasm. It localises to the cell projection. Its subcellular location is the stereocilium. The protein localises to the growth cone. It is found in the synapse. Functionally, involved in hearing and vision as member of the USH2 complex. Necessary for elongation and maintenance of inner and outer hair cell stereocilia in the organ of Corti in the inner ear. Involved in the maintenance of the hair bundle ankle region, which connects stereocilia in cochlear hair cells of the inner ear. In retina photoreceptors, required for the maintenance of periciliary membrane complex that seems to play a role in regulating intracellular protein transport. This Rattus norvegicus (Rat) protein is Whirlin.